Consider the following 410-residue polypeptide: Elongation factor Tu (410 aa).

Positions 10 to 214 constitute a tr-type G domain; it reads KPHVNIGTIG…EVDAYIPTPE (205 aa). Positions 19 to 26 are G1; the sequence is GHVDHGKT. 19–26 is a GTP binding site; it reads GHVDHGKT. Position 26 (threonine 26) interacts with Mg(2+). Residues 60 to 64 are G2; the sequence is GITIN. The interval 81–84 is G3; that stretch reads DCPG. GTP is bound by residues 81 to 85 and 136 to 139; these read DCPGH and NKAD. A G4 region spans residues 136-139; the sequence is NKAD. Positions 174-176 are G5; sequence SAL.

This sequence belongs to the TRAFAC class translation factor GTPase superfamily. Classic translation factor GTPase family. EF-Tu/EF-1A subfamily. Monomer.

The protein resides in the cytoplasm. It catalyses the reaction GTP + H2O = GDP + phosphate + H(+). Functionally, GTP hydrolase that promotes the GTP-dependent binding of aminoacyl-tRNA to the A-site of ribosomes during protein biosynthesis. The chain is Elongation factor Tu from Arthrospira platensis (Spirulina platensis).